A 172-amino-acid chain; its full sequence is Peptidyl-prolyl cis-trans isomerase (172 aa).

The 159-residue stretch at 10–168 (YFDVYANEES…YRIEIRDCGV (159 aa)) folds into the PPIase cyclophilin-type domain.

The protein belongs to the cyclophilin-type PPIase family.

It is found in the cytoplasm. The enzyme catalyses [protein]-peptidylproline (omega=180) = [protein]-peptidylproline (omega=0). In terms of biological role, PPIases accelerate the folding of proteins. They catalyze the cis-trans isomerization of proline imidic peptide bonds in oligopeptides. This is Peptidyl-prolyl cis-trans isomerase (CPR1) from Encephalitozoon cuniculi (strain GB-M1) (Microsporidian parasite).